The primary structure comprises 603 residues: Myotubularin (603 aa).

Residues Met1–Ser13 are compositionally biased toward polar residues. The tract at residues Met1 to Asp25 is disordered. Ser13 and Ser18 each carry phosphoserine. Residues Leu14 to Asp25 show a composition bias toward basic and acidic residues. A GRAM domain is found at Arg29–Gly97. The Myotubularin phosphatase domain occupies Gly163 to Tyr538. Asn288, Asn313, and Ile314 together coordinate a 1,2-diacyl-sn-glycero-3-phospho-(1D-myo-inositol-3,5-bisphosphate). A 1,2-diacyl-sn-glycero-3-phospho-(1D-myo-inositol-3-phosphate) contacts are provided by Asn288, Asn313, and Ile314. Residue Cys375 is the Phosphocysteine intermediate of the active site. Positions 376, 377, 378, 379, 380, 381, 417, and 421 each coordinate a 1,2-diacyl-sn-glycero-3-phospho-(1D-myo-inositol-3,5-bisphosphate). A 1,2-diacyl-sn-glycero-3-phospho-(1D-myo-inositol-3-phosphate)-binding residues include Ser376, Asp377, Gly378, Trp379, Asp380, and Arg381. Arg421 serves as a coordination point for a 1,2-diacyl-sn-glycero-3-phospho-(1D-myo-inositol-3-phosphate). Residue Thr495 is modified to Phosphothreonine. Residues Ser579–Phe603 form a disordered region. Ser588 bears the Phosphoserine mark.

Belongs to the protein-tyrosine phosphatase family. Non-receptor class myotubularin subfamily. As to quaternary structure, heterodimer with MTMR12. Interacts with KMT2A/MLL1 (via SET domain). Interacts with DES in skeletal muscle but not in cardiac muscle. Interacts with SPEG.

Its subcellular location is the cytoplasm. It is found in the cell membrane. The protein localises to the cell projection. It localises to the filopodium. The protein resides in the ruffle. Its subcellular location is the late endosome. It is found in the myofibril. The protein localises to the sarcomere. It carries out the reaction a 1,2-diacyl-sn-glycero-3-phospho-(1D-myo-inositol-3-phosphate) + H2O = a 1,2-diacyl-sn-glycero-3-phospho-(1D-myo-inositol) + phosphate. The catalysed reaction is a 1,2-diacyl-sn-glycero-3-phospho-(1D-myo-inositol-3,5-bisphosphate) + H2O = a 1,2-diacyl-sn-glycero-3-phospho-(1D-myo-inositol-5-phosphate) + phosphate. It catalyses the reaction 1,2-dioctanoyl-sn-glycero-3-phospho-(1-D-myo-inositol-3-phosphate) + H2O = 1,2-dioctanoyl-sn-glycero-3-phospho-(1D-myo-inositol) + phosphate. The enzyme catalyses 1,2-dioctanoyl-sn-glycero-3-phospho-(1D-myo-inositol-3,5-bisphosphate) + H2O = 1,2-dioctanoyl-sn-glycero-3-phospho-(1D-myo-inositol-5-phosphate) + phosphate. It carries out the reaction 1,2-dihexadecanoyl-sn-glycero-3-phospho-(1D-myo-inositol-3,5-phosphate) + H2O = 1,2-dihexadecanoyl-sn-glycero-3-phospho-(1D-myo-inositol-5-phosphate) + phosphate. Its activity is regulated as follows. Allosterically activated by phosphatidylinositol 5-phosphate (PI5P). Its function is as follows. Lipid phosphatase which dephosphorylates phosphatidylinositol 3-monophosphate (PI3P) and phosphatidylinositol 3,5-bisphosphate (PI(3,5)P2). Has also been shown to dephosphorylate phosphotyrosine- and phosphoserine-containing peptides. Negatively regulates EGFR degradation through regulation of EGFR trafficking from the late endosome to the lysosome. Plays a role in vacuolar formation and morphology. Regulates desmin intermediate filament assembly and architecture. Plays a role in mitochondrial morphology and positioning. Required for skeletal muscle maintenance but not for myogenesis. In skeletal muscles, stabilizes MTMR12 protein levels. This Homo sapiens (Human) protein is Myotubularin.